The sequence spans 145 residues: Maximins 3/H3 type 1 (145 aa).

A signal peptide spans 1–18 (MNFKYIVAVSFLIASAYA). Propeptides lie at residues 19–43 (RSVQ…LREI) and 74–124 (RIAE…KEKR). An Isoleucine amide modification is found at Ile144.

This sequence belongs to the bombinin family. Expressed by the skin glands.

The protein localises to the secreted. Its function is as follows. Maximin-3 shows antibacterial activity against both Gram-positive and Gram-negative bacteria. It also shows antimicrobial activity against the fungus C.albicans, but not against A.flavus nor P.uticale. It has little hemolytic activity. It possess a significant cytotoxicity against tumor cell lines. It possess a significant anti-HIV activity. It shows high spermicidal activity. Functionally, maximin-H3 shows antibacterial activity against both Gram-positive and Gram-negative bacteria. It also shows antimicrobial activity against the fungus C.albicans. Shows strong hemolytic activity. In Bombina maxima (Giant fire-bellied toad), this protein is Maximins 3/H3 type 1.